Consider the following 274-residue polypeptide: Transmembrane O-methyltransferase (274 aa).

A helical membrane pass occupies residues 14 to 34; the sequence is VGTMSPAIALAFLPLVVTLLV. Residues Glu-120, 122–123, Ser-128, Glu-146, and Ser-176 each bind S-adenosyl-L-methionine; that span reads GT.

This sequence belongs to the class I-like SAM-binding methyltransferase superfamily. Cation-dependent O-methyltransferase family. As to quaternary structure, interacts with LHFPL5, PCDH15, TMC1, TMC2 and TMIE. Interacts directly with TMC1. The interaction of TOMT with TMC1 and TMC2 is required for the transportation of TMC1/2 into the stereocilia of hair cells.

The protein resides in the membrane. It localises to the cytoplasm. The protein localises to the endoplasmic reticulum. It carries out the reaction a catechol + S-adenosyl-L-methionine = a guaiacol + S-adenosyl-L-homocysteine + H(+). Functionally, catalyzes the O-methylation, and thereby the inactivation, of catecholamine neurotransmitters and catechol hormones. Required for auditory function. Component of the cochlear hair cell's mechanotransduction (MET) machinery. Involved in the assembly of the asymmetric tip-link MET complex. Required for transportation of TMC1 and TMC2 proteins into the mechanically sensitive stereocilia of the hair cells. The function in MET is independent of the enzymatic activity. The chain is Transmembrane O-methyltransferase from Propithecus coquereli (Coquerel's sifaka).